The following is a 407-amino-acid chain: Peptide chain release factor subunit 1 (407 aa).

This sequence belongs to the eukaryotic release factor 1 family. In terms of assembly, heterodimer of two subunits, one of which binds GTP.

It is found in the cytoplasm. Directs the termination of nascent peptide synthesis (translation) in response to the termination codons UAA, UAG and UGA. The chain is Peptide chain release factor subunit 1 (prf1) from Archaeoglobus fulgidus (strain ATCC 49558 / DSM 4304 / JCM 9628 / NBRC 100126 / VC-16).